The chain runs to 218 residues: Probable transaldolase (218 aa).

Residue Lys-83 is the Schiff-base intermediate with substrate of the active site.

It belongs to the transaldolase family. Type 3B subfamily.

It localises to the cytoplasm. The enzyme catalyses D-sedoheptulose 7-phosphate + D-glyceraldehyde 3-phosphate = D-erythrose 4-phosphate + beta-D-fructose 6-phosphate. It participates in carbohydrate degradation; pentose phosphate pathway; D-glyceraldehyde 3-phosphate and beta-D-fructose 6-phosphate from D-ribose 5-phosphate and D-xylulose 5-phosphate (non-oxidative stage): step 2/3. In terms of biological role, transaldolase is important for the balance of metabolites in the pentose-phosphate pathway. The polypeptide is Probable transaldolase (Thermotoga sp. (strain RQ2)).